The sequence spans 87 residues: Small ribosomal subunit protein uS15c (87 aa).

It belongs to the universal ribosomal protein uS15 family. As to quaternary structure, part of the 30S ribosomal subunit.

It is found in the plastid. The protein resides in the chloroplast. In Solanum lycopersicum (Tomato), this protein is Small ribosomal subunit protein uS15c (rps15).